A 291-amino-acid chain; its full sequence is Phosphatidylglycerol--prolipoprotein diacylglyceryl transferase (291 aa).

Transmembrane regions (helical) follow at residues 21–41, 60–80, 96–116, 130–150, 198–218, 225–245, and 260–280; these read VSLHWYGLMYLVGFVFAMWLA, LLYAGFLGVFLGGRIGYVLFY, WDGGMSFHGGLIGVICVMIWF, FIAPLIPFGLGAGRLGNFING, SQLYELFLEGIVLFIILNLFI, GAVSGLFLIGYGAFRIIVEFF, and ISMGQILSIPMIVAGAAMMIW. Residue R143 participates in a 1,2-diacyl-sn-glycero-3-phospho-(1'-sn-glycerol) binding.

Belongs to the Lgt family.

The protein resides in the cell inner membrane. It carries out the reaction L-cysteinyl-[prolipoprotein] + a 1,2-diacyl-sn-glycero-3-phospho-(1'-sn-glycerol) = an S-1,2-diacyl-sn-glyceryl-L-cysteinyl-[prolipoprotein] + sn-glycerol 1-phosphate + H(+). The protein operates within protein modification; lipoprotein biosynthesis (diacylglyceryl transfer). Functionally, catalyzes the transfer of the diacylglyceryl group from phosphatidylglycerol to the sulfhydryl group of the N-terminal cysteine of a prolipoprotein, the first step in the formation of mature lipoproteins. This Cronobacter sakazakii (strain ATCC BAA-894) (Enterobacter sakazakii) protein is Phosphatidylglycerol--prolipoprotein diacylglyceryl transferase.